The chain runs to 312 residues: Lipoyl synthase (312 aa).

[4Fe-4S] cluster contacts are provided by Cys37, Cys42, Cys48, Cys67, Cys71, Cys74, and Ser281. The Radical SAM core domain maps to 52 to 270 (RDGPGTATFM…AVAEREFDFL (219 aa)).

Belongs to the radical SAM superfamily. Lipoyl synthase family. It depends on [4Fe-4S] cluster as a cofactor.

The protein resides in the cytoplasm. The catalysed reaction is [[Fe-S] cluster scaffold protein carrying a second [4Fe-4S](2+) cluster] + N(6)-octanoyl-L-lysyl-[protein] + 2 oxidized [2Fe-2S]-[ferredoxin] + 2 S-adenosyl-L-methionine + 4 H(+) = [[Fe-S] cluster scaffold protein] + N(6)-[(R)-dihydrolipoyl]-L-lysyl-[protein] + 4 Fe(3+) + 2 hydrogen sulfide + 2 5'-deoxyadenosine + 2 L-methionine + 2 reduced [2Fe-2S]-[ferredoxin]. Its pathway is protein modification; protein lipoylation via endogenous pathway; protein N(6)-(lipoyl)lysine from octanoyl-[acyl-carrier-protein]: step 2/2. Catalyzes the radical-mediated insertion of two sulfur atoms into the C-6 and C-8 positions of the octanoyl moiety bound to the lipoyl domains of lipoate-dependent enzymes, thereby converting the octanoylated domains into lipoylated derivatives. This is Lipoyl synthase from Halorubrum lacusprofundi (strain ATCC 49239 / DSM 5036 / JCM 8891 / ACAM 34).